The primary structure comprises 250 residues: MFPLLGQSACAALNSLPAKRKKAGLQAHRKVYKQLLQYHSFTKINKFLELKHPDPKKVKYRLFFEVSLGPRIVDVIVLTSYETERVCYVVELKTCLGSEFNFTSVRAAQRTQGLCQLYDSTKYLSNNAPLGGERWEVRAHLLFKSQSAMKTLYVEHPGFQFNQLQCTTGALSVFLKSREDVACRQLLYQGLQCAALAKKMRVLGTKSTKRARDKPTQVSRVPAQRSPVQKARGRKQAESHKKGASKGRAG.

The tract at residues 205–250 is disordered; that stretch reads TKSTKRARDKPTQVSRVPAQRSPVQKARGRKQAESHKKGASKGRAG.

The protein belongs to the herpesviridae UL24 family.

The chain is Protein UL24 homolog (20) from Alcelaphine herpesvirus 1 (strain C500) (AlHV-1).